The following is a 710-amino-acid chain: Dual specificity protein kinase shkE (710 aa).

Composition is skewed to low complexity over residues 83 to 94, 107 to 129, and 197 to 208; these read DVSDSNNNNSTS, NNNN…NNNN, and QKQQQSQASIQQ. Disordered stretches follow at residues 83–136 and 189–232; these read DVSD…PTVI and QHLT…IPPE. Residues 237-495 enclose the Protein kinase domain; that stretch reads DVKTDLLGGG…EVTQRMNEVL (259 aa). Residues 243-251 and Lys264 each bind ATP; that span reads LGGGAYGKV. The active-site Proton acceptor is the Asp359. Residues 597–707 enclose the SH2 domain; sequence WFHFDISRDI…CPITEIKVPY (111 aa).

Belongs to the protein kinase superfamily. Ser/Thr protein kinase family. SH2 domain-containing protein kinase subfamily.

Its subcellular location is the membrane. It carries out the reaction L-seryl-[protein] + ATP = O-phospho-L-seryl-[protein] + ADP + H(+). The enzyme catalyses L-threonyl-[protein] + ATP = O-phospho-L-threonyl-[protein] + ADP + H(+). In terms of biological role, required for proper chemotaxis and phagocytosis; proper spatiotemporal control of F-actin levels in chemotaxing cells. Negative regulator of the PI3K (phosphatidylinositol 3 kinase) pathway. Predominantly phosphorylates serines and threonines and tyrosines at a lower level. This is Dual specificity protein kinase shkE (shkE) from Dictyostelium discoideum (Social amoeba).